Here is a 358-residue protein sequence, read N- to C-terminus: DNA polymerase IV (358 aa).

Residues 4–185 form the UmuC domain; it reads IIHIDMDCYF…LPLIKIPGVG (182 aa). Mg(2+)-binding residues include Asp-8 and Asp-103. Residue Glu-104 is part of the active site.

It belongs to the DNA polymerase type-Y family. In terms of assembly, monomer. Requires Mg(2+) as cofactor.

It is found in the cytoplasm. It catalyses the reaction DNA(n) + a 2'-deoxyribonucleoside 5'-triphosphate = DNA(n+1) + diphosphate. In terms of biological role, poorly processive, error-prone DNA polymerase involved in untargeted mutagenesis. Copies undamaged DNA at stalled replication forks, which arise in vivo from mismatched or misaligned primer ends. These misaligned primers can be extended by PolIV. Exhibits no 3'-5' exonuclease (proofreading) activity. May be involved in translesional synthesis, in conjunction with the beta clamp from PolIII. The polypeptide is DNA polymerase IV (Shewanella denitrificans (strain OS217 / ATCC BAA-1090 / DSM 15013)).